The primary structure comprises 542 residues: Probable protein kinase UbiB (542 aa).

Residues 123–505 form the Protein kinase domain; the sequence is DFDEQALASA…ADNKTYNVKM (383 aa). ATP-binding positions include 129–137 and Lys156; that span reads LASASIAQV. The Proton acceptor role is filled by Asp291. Residues 506–526 form a helical membrane-spanning segment; the sequence is IIMGSIILSLLWQFNSLPLWL.

It belongs to the ABC1 family. UbiB subfamily.

It localises to the cell inner membrane. It functions in the pathway cofactor biosynthesis; ubiquinone biosynthesis [regulation]. Its function is as follows. Is probably a protein kinase regulator of UbiI activity which is involved in aerobic coenzyme Q (ubiquinone) biosynthesis. The sequence is that of Probable protein kinase UbiB from Haemophilus ducreyi (strain 35000HP / ATCC 700724).